We begin with the raw amino-acid sequence, 201 residues long: Small ribosomal subunit protein uS4c (201 aa).

The disordered stretch occupies residues 15–43 (LGALPGLTNKRPRAGSDLRNQSRSGKRSQ). Residues 89–149 (MRLDNILFRL…DEQKSIALIQ (61 aa)) form the S4 RNA-binding domain.

In terms of assembly, component of the chloroplast small ribosomal subunit (SSU). Mature 70S chloroplast ribosomes of higher plants consist of a small (30S) and a large (50S) subunit. The 30S small subunit contains 1 molecule of ribosomal RNA (16S rRNA) and 24 different proteins. The 50S large subunit contains 3 rRNA molecules (23S, 5S and 4.5S rRNA) and 33 different proteins.

The protein localises to the plastid. It is found in the chloroplast. Component of the chloroplast ribosome (chloro-ribosome), a dedicated translation machinery responsible for the synthesis of chloroplast genome-encoded proteins, including proteins of the transcription and translation machinery and components of the photosynthetic apparatus. This Spinacia oleracea (Spinach) protein is Small ribosomal subunit protein uS4c (rps4).